The primary structure comprises 139 residues: Large ribosomal subunit protein uL16 (139 aa).

Belongs to the universal ribosomal protein uL16 family. Part of the 50S ribosomal subunit.

In terms of biological role, binds 23S rRNA and is also seen to make contacts with the A and possibly P site tRNAs. This Microcystis aeruginosa (strain NIES-843 / IAM M-2473) protein is Large ribosomal subunit protein uL16.